Reading from the N-terminus, the 109-residue chain is DNA-binding protein Mpal_0536 (109 aa).

The interval 14 to 35 (MAQLQSQQMDQQQMDEEKQRAK) is disordered. The segment covering 16–25 (QLQSQQMDQQ) has biased composition (low complexity).

The protein belongs to the PDCD5 family.

In Methanosphaerula palustris (strain ATCC BAA-1556 / DSM 19958 / E1-9c), this protein is DNA-binding protein Mpal_0536.